Reading from the N-terminus, the 23-residue chain is Acetylcholine receptor subunit gamma (23 aa).

It belongs to the ligand-gated ion channel (TC 1.A.9) family. Acetylcholine receptor (TC 1.A.9.1) subfamily. Gamma/CHRNG sub-subfamily. In terms of assembly, pentamer of two alpha chains, and one each of the beta, delta, and gamma chains.

The protein resides in the postsynaptic cell membrane. The protein localises to the cell membrane. The enzyme catalyses K(+)(in) = K(+)(out). It carries out the reaction Na(+)(in) = Na(+)(out). Functionally, after binding acetylcholine, the AChR responds by an extensive change in conformation that affects all subunits and leads to opening of an ion-conducting channel across the plasma membrane. This chain is Acetylcholine receptor subunit gamma (chrng), found in Electrophorus electricus (Electric eel).